The following is an 85-amino-acid chain: RNA-binding protein Hfq (85 aa).

In terms of domain architecture, Sm spans 9–69 (DQLLNTARKD…ISTIIPAKII (61 aa)).

This sequence belongs to the Hfq family. In terms of assembly, homohexamer.

In terms of biological role, RNA chaperone that binds small regulatory RNA (sRNAs) and mRNAs to facilitate mRNA translational regulation in response to envelope stress, environmental stress and changes in metabolite concentrations. Also binds with high specificity to tRNAs. This is RNA-binding protein Hfq from Leptospira interrogans serogroup Icterohaemorrhagiae serovar copenhageni (strain Fiocruz L1-130).